Consider the following 235-residue polypeptide: 2,3,4,5-tetrahydropyridine-2,6-dicarboxylate N-acetyltransferase (235 aa).

Belongs to the transferase hexapeptide repeat family. DapH subfamily.

It carries out the reaction (S)-2,3,4,5-tetrahydrodipicolinate + acetyl-CoA + H2O = L-2-acetamido-6-oxoheptanedioate + CoA. Its pathway is amino-acid biosynthesis; L-lysine biosynthesis via DAP pathway; LL-2,6-diaminopimelate from (S)-tetrahydrodipicolinate (acetylase route): step 1/3. Functionally, catalyzes the transfer of an acetyl group from acetyl-CoA to tetrahydrodipicolinate. The sequence is that of 2,3,4,5-tetrahydropyridine-2,6-dicarboxylate N-acetyltransferase from Exiguobacterium sibiricum (strain DSM 17290 / CCUG 55495 / CIP 109462 / JCM 13490 / 255-15).